A 294-amino-acid polypeptide reads, in one-letter code: MNILENINTEKRNPRSLNLDSMSIAEAVSLMIDEEYGVIEALKEQHRNITEVILATSYSLRNGGRIIYIGAGTSGRLGILDAVECPPTFSVDYNTIVGLIAGGEKAFIQAQEGAEDAANFGKEDLQSINLTAKDIVIGIAASGRTPYVIGALEYANSIGATTVAISCTKQAKISKYAKYSIEAVPGPEVLTGSTRLKAGTTQKLILNMISTLSMVSVGKVYQNLMVDVKPTNQKLIERSKNIICEVTGVDYTTAEKFYLKANKSVKVAIVMILNNCDYEKALAILKNNNNFIKS.

Positions 56-219 (TSYSLRNGGR…STLSMVSVGK (164 aa)) constitute an SIS domain. The Proton donor role is filled by Glu84. Glu115 is a catalytic residue.

It belongs to the GCKR-like family. MurNAc-6-P etherase subfamily. Homodimer.

It catalyses the reaction N-acetyl-D-muramate 6-phosphate + H2O = N-acetyl-D-glucosamine 6-phosphate + (R)-lactate. Its pathway is amino-sugar metabolism; 1,6-anhydro-N-acetylmuramate degradation. It participates in amino-sugar metabolism; N-acetylmuramate degradation. It functions in the pathway cell wall biogenesis; peptidoglycan recycling. In terms of biological role, specifically catalyzes the cleavage of the D-lactyl ether substituent of MurNAc 6-phosphate, producing GlcNAc 6-phosphate and D-lactate. Together with AnmK, is also required for the utilization of anhydro-N-acetylmuramic acid (anhMurNAc) either imported from the medium or derived from its own cell wall murein, and thus plays a role in cell wall recycling. The sequence is that of N-acetylmuramic acid 6-phosphate etherase from Francisella tularensis subsp. holarctica (strain LVS).